We begin with the raw amino-acid sequence, 712 residues long: Polyribonucleotide nucleotidyltransferase (712 aa).

Mg(2+) is bound by residues Asp487 and Asp493. A KH domain is found at 554–613; sequence PKIITMTINPDKIRDVIGPSGKQINKIIEETGVKIDIEQDGTVFISSINQEMNDKAKKII. An S1 motif domain is found at 623 to 691; it reads GEIYEAKVKR…KQGRVNLSRK (69 aa).

Belongs to the polyribonucleotide nucleotidyltransferase family. Mg(2+) serves as cofactor.

The protein localises to the cytoplasm. The enzyme catalyses RNA(n+1) + phosphate = RNA(n) + a ribonucleoside 5'-diphosphate. Functionally, involved in mRNA degradation. Catalyzes the phosphorolysis of single-stranded polyribonucleotides processively in the 3'- to 5'-direction. The sequence is that of Polyribonucleotide nucleotidyltransferase from Bacillus cereus (strain ATCC 14579 / DSM 31 / CCUG 7414 / JCM 2152 / NBRC 15305 / NCIMB 9373 / NCTC 2599 / NRRL B-3711).